Reading from the N-terminus, the 314-residue chain is Mitochondrial thiamine pyrophosphate carrier 1 (314 aa).

6 helical membrane passes run 14-30, 84-100, 116-136, 170-186, 217-233, and 285-302; these read VAAWKTLLAGAVSGLLA, LLYVTYGSAQFSSYSLF, LVVGAFAGITSSIVSYPFDVL, GSIASMTTITLTASIMF, SAGTIGGVIAKIITFPL, and GILVALSKTIPTTFVSFW. Solcar repeat units lie at residues 14-103, 110-195, and 210-310; these read VAAW…FNRY, EARL…IRIY, and ELAT…AIHY.

It belongs to the mitochondrial carrier (TC 2.A.29) family.

The protein localises to the mitochondrion inner membrane. Its function is as follows. Mitochondrial transporter that mediates uptake of thiamine pyrophosphate (ThPP) into mitochondria. The chain is Mitochondrial thiamine pyrophosphate carrier 1 (TPC1) from Saccharomyces cerevisiae (strain YJM789) (Baker's yeast).